The following is a 248-amino-acid chain: MAIKVGVLGAKGRVGQTIVAAVNDTDDLELVAEVDHDDDLSLLVDSGAEVVVDFTTPNAVMGNLEFCINNGISAVVGTTGFDEDRLAQVRSWCASNEGVGVLIAPNFAISAVLTMVFARQAARFFESAEVIELHHPNKLDAPSGTAIHTAQGIAEARREAGMAAQPDATEQALDGSRGADVDGIPVHAVRMSGMVAHEAVIFGTQGQTLTIKQDSYDRNSFAPGVLVGIRNIAQHPGLTVGLEHYLDL.

NAD(+)-binding positions include 9 to 14, 77 to 79, and 104 to 107; these read GAKGRV, GTT, and APNF. Histidine 134 functions as the Proton donor/acceptor in the catalytic mechanism. Histidine 135 contacts (S)-2,3,4,5-tetrahydrodipicolinate. Residue lysine 138 is the Proton donor of the active site. Position 144 to 145 (144 to 145) interacts with (S)-2,3,4,5-tetrahydrodipicolinate; that stretch reads GT.

Belongs to the DapB family.

It is found in the cytoplasm. The catalysed reaction is (S)-2,3,4,5-tetrahydrodipicolinate + NAD(+) + H2O = (2S,4S)-4-hydroxy-2,3,4,5-tetrahydrodipicolinate + NADH + H(+). It carries out the reaction (S)-2,3,4,5-tetrahydrodipicolinate + NADP(+) + H2O = (2S,4S)-4-hydroxy-2,3,4,5-tetrahydrodipicolinate + NADPH + H(+). The protein operates within amino-acid biosynthesis; L-lysine biosynthesis via DAP pathway; (S)-tetrahydrodipicolinate from L-aspartate: step 4/4. Its function is as follows. Catalyzes the conversion of 4-hydroxy-tetrahydrodipicolinate (HTPA) to tetrahydrodipicolinate. The sequence is that of 4-hydroxy-tetrahydrodipicolinate reductase from Corynebacterium efficiens (strain DSM 44549 / YS-314 / AJ 12310 / JCM 11189 / NBRC 100395).